A 437-amino-acid chain; its full sequence is tRNA(Ile2) 2-agmatinylcytidine synthetase TiaS (437 aa).

This sequence belongs to the TiaS family.

It is found in the cytoplasm. The enzyme catalyses cytidine(34) in tRNA(Ile2) + agmatine + ATP + H2O = 2-agmatinylcytidine(34) in tRNA(Ile2) + AMP + 2 phosphate + 2 H(+). Functionally, ATP-dependent agmatine transferase that catalyzes the formation of 2-agmatinylcytidine (agm2C) at the wobble position (C34) of tRNA(Ile2), converting the codon specificity from AUG to AUA. The protein is tRNA(Ile2) 2-agmatinylcytidine synthetase TiaS of Acidilobus saccharovorans (strain DSM 16705 / JCM 18335 / VKM B-2471 / 345-15).